The sequence spans 328 residues: Reticulocalbin-3 (328 aa).

Positions 1-20 are cleaved as a signal peptide; sequence MMWRPSVLLLLLLLRHGAQG. The segment at 19 to 49 is disordered; sequence QGKPSPDAGPHGQGRVHQAAPLSDAPHDDAH. 6 consecutive EF-hand domains span residues 75 to 112, 113 to 148, 163 to 198, 200 to 235, 241 to 276, and 277 to 312; these read ESQA…TQQR, HIRD…HYAP, KMLA…EEFP, MRDI…AEPG, WVQT…PAQD, and QPLV…FVGS. Residues Asp-92, Asp-94, Trp-96, Glu-101, Asp-126, Asp-128, Asp-130, Arg-132, and Glu-137 each contribute to the Ca(2+) site. Asn-140 carries an N-linked (GlcNAc...) asparagine glycan. Asp-176, Asp-178, Asp-180, Met-182, Glu-187, Asp-213, Asn-215, Asp-217, Tyr-219, Glu-224, Asp-254, Asn-256, Asp-258, His-260, Glu-265, Asp-290, Asp-292, Asp-294, Arg-296, and Glu-301 together coordinate Ca(2+). The Prevents secretion from ER motif lies at 325–328; it reads HDEL.

This sequence belongs to the CREC family. Interacts with PCSK6 (immature form including the propeptide); probably involved in the maturation and the secretion of PCSK6. In terms of processing, degraded by PCSK6 and other endoproteases including FURIN and PCSK5. N-glycosylated. In terms of tissue distribution, widely expressed.

The protein resides in the endoplasmic reticulum lumen. Functionally, probable molecular chaperone assisting protein biosynthesis and transport in the endoplasmic reticulum. Required for the proper biosynthesis and transport of pulmonary surfactant-associated protein A/SP-A, pulmonary surfactant-associated protein D/SP-D and the lipid transporter ABCA3. By regulating both the proper expression and the degradation through the endoplasmic reticulum-associated protein degradation pathway of these proteins plays a crucial role in pulmonary surfactant homeostasis. Has an anti-fibrotic activity by negatively regulating the secretion of type I and type III collagens. This calcium-binding protein also transiently associates with immature PCSK6 and regulates its secretion. This is Reticulocalbin-3 from Homo sapiens (Human).